We begin with the raw amino-acid sequence, 385 residues long: Spindle pole component BBP1 (385 aa).

S29 carries the post-translational modification Phosphoserine. The span at 34–48 (YKDQEERRDRSRYAQ) shows a compositional bias: basic and acidic residues. A disordered region spans residues 34 to 76 (YKDQEERRDRSRYAQDDTNFSMKFGNDSNRRSTNLSRSNSWSG). The segment covering 64–75 (RSTNLSRSNSWS) has biased composition (low complexity). S73 and S115 each carry phosphoserine. A coiled-coil region spans residues 229 to 355 (QMDLNSRDLE…KDMQRDNYES (127 aa)).

Belongs to the BBP1 family. As to quaternary structure, homodimer. Interacts with KAR1, MPS2 and SPC29.

The protein localises to the cytoplasm. Its subcellular location is the cytoskeleton. It localises to the microtubule organizing center. It is found in the spindle pole body. Functionally, component of the spindle pole body (SPB) required for insertion of the nascent SPB into the nuclear envelope and for the proper execution of spindle pole body (SPB) duplication. Connects the central plaque of the SPB with the half-bridge. Required for proper localization of CDC5 at the SPB and for proper M-phase progression. This is Spindle pole component BBP1 (BBP1) from Saccharomyces cerevisiae (strain ATCC 204508 / S288c) (Baker's yeast).